The chain runs to 132 residues: Large ribosomal subunit protein bL19 (132 aa).

This sequence belongs to the bacterial ribosomal protein bL19 family.

In terms of biological role, this protein is located at the 30S-50S ribosomal subunit interface and may play a role in the structure and function of the aminoacyl-tRNA binding site. This chain is Large ribosomal subunit protein bL19, found in Rhodospirillum centenum (strain ATCC 51521 / SW).